The chain runs to 155 residues: Endoribonuclease YbeY (155 aa).

Residues H114, H118, and H124 each contribute to the Zn(2+) site.

Belongs to the endoribonuclease YbeY family. It depends on Zn(2+) as a cofactor.

It is found in the cytoplasm. Single strand-specific metallo-endoribonuclease involved in late-stage 70S ribosome quality control and in maturation of the 3' terminus of the 16S rRNA. This is Endoribonuclease YbeY from Shigella dysenteriae serotype 1 (strain Sd197).